The primary structure comprises 135 residues: Galectin-1 (135 aa).

An N-acetylalanine modification is found at Ala-2. The Galectin domain maps to 4–135 (GLVASNLNLK…DFKIKCVAFE (132 aa)). N6-acetyllysine is present on residues Lys-13, Lys-19, and Lys-29. Residue Ser-30 is modified to Phosphoserine. Residues 45-49 (HFNPR), His-53, Asn-62, and 69-72 (WGAE) contribute to the a beta-D-galactoside site. N6-acetyllysine is present on Lys-128.

In terms of assembly, homodimer. Binds LGALS3BP. Interacts with CD2, CD3, CD4, CD6, CD7, CD43, ALCAM and CD45. Interacts with laminin (via poly-N-acetyllactosamine). Interacts with SUSD2. Interacts with cargo receptor TMED10; the interaction mediates the translocation from the cytoplasm into the ERGIC (endoplasmic reticulum-Golgi intermediate compartment) and thereby secretion.

Its subcellular location is the secreted. The protein localises to the extracellular space. The protein resides in the extracellular matrix. It localises to the cytoplasm. In terms of biological role, lectin that binds beta-galactoside and a wide array of complex carbohydrates. Plays a role in regulating apoptosis, cell proliferation and cell differentiation. Inhibits CD45 protein phosphatase activity and therefore the dephosphorylation of Lyn kinase. Strong inducer of T-cell apoptosis. This chain is Galectin-1 (LGALS1), found in Sus scrofa (Pig).